Here is a 196-residue protein sequence, read N- to C-terminus: Imidazoleglycerol-phosphate dehydratase (196 aa).

This sequence belongs to the imidazoleglycerol-phosphate dehydratase family.

The protein resides in the cytoplasm. The enzyme catalyses D-erythro-1-(imidazol-4-yl)glycerol 3-phosphate = 3-(imidazol-4-yl)-2-oxopropyl phosphate + H2O. Its pathway is amino-acid biosynthesis; L-histidine biosynthesis; L-histidine from 5-phospho-alpha-D-ribose 1-diphosphate: step 6/9. In Clostridium botulinum (strain 657 / Type Ba4), this protein is Imidazoleglycerol-phosphate dehydratase.